We begin with the raw amino-acid sequence, 344 residues long: Uroporphyrinogen decarboxylase (344 aa).

Residues 26–30, Asp76, Tyr152, Ser207, and His323 each bind substrate; that span reads RQAGR.

It belongs to the uroporphyrinogen decarboxylase family. Homodimer.

Its subcellular location is the cytoplasm. It catalyses the reaction uroporphyrinogen III + 4 H(+) = coproporphyrinogen III + 4 CO2. Its pathway is porphyrin-containing compound metabolism; protoporphyrin-IX biosynthesis; coproporphyrinogen-III from 5-aminolevulinate: step 4/4. Its function is as follows. Catalyzes the decarboxylation of four acetate groups of uroporphyrinogen-III to yield coproporphyrinogen-III. The sequence is that of Uroporphyrinogen decarboxylase from Hyphomonas neptunium (strain ATCC 15444).